The sequence spans 1394 residues: Ninein-like protein (1394 aa).

2 EF-hand domains span residues 8-43 (HYVS…LGLE) and 42-77 (LEEQ…VLSS). 2 disordered regions span residues 77–99 (SGSG…SCAV) and 126–166 (KYGS…KEPQ). Phosphoserine is present on S149. The segment covering 151–166 (ESLKSDEDAESAKEPQ) has biased composition (basic and acidic residues). 2 EF-hand domains span residues 197–232 (TPEN…IGLH) and 234–269 (LEKQ…HEPP). 5 residues coordinate Ca(2+): D247, D249, D251, R253, and E258. Coiled coils occupy residues 382–423 (RQEL…MDDC), 461–515 (WEQA…DSEK), and 544–584 (EQFT…SRQS). A KEN box motif is present at residues 494–496 (KEN). The tract at residues 578-602 (LPRSRQSPAGTPGTHRRRIPGRGPA) is disordered. The D-box motif lies at 632–640 (RMQLETKVN). Residues 835 to 863 (EKEKLEQTYREQVEGLVQEADVLRALLKN) adopt a coiled-coil conformation. The span at 866–893 (TVVSDQQERTPSSMSLGPDSRQQPTARQ) shows a compositional bias: polar residues. The segment at 866-977 (TVVSDQQERT…SARTLTGQGQ (112 aa)) is disordered. The segment covering 939-951 (RSSENLGVRDNHQ) has biased composition (basic and acidic residues). Coiled-coil stretches lie at residues 1057–1229 (SESE…ELTE) and 1269–1331 (GARV…LRKQ).

Interacts with gamma-tubulin and TUBGCP4. Interacts with anaphase promoting complex/cyclosome (APC/C). Interacts with CDC20 and FZR1. Interacts with LCA5 and USH2A. Post-translationally, phosphorylated by PLK1 which disrupts its centrosome association and interaction with gamma-tubulin. Ubiquitinated by the APC/C complex leading to its degradation.

Its subcellular location is the cytoplasm. The protein resides in the cytoskeleton. It localises to the microtubule organizing center. The protein localises to the centrosome. Functionally, involved in the microtubule organization in interphase cells. Overexpression induces the fragmentation of the Golgi, and causes lysosomes to disperse toward the cell periphery; it also interferes with mitotic spindle assembly. Involved in vesicle transport in photoreceptor cells. This is Ninein-like protein (Ninl) from Mus musculus (Mouse).